The primary structure comprises 184 residues: MNWRSERIWIEVITGSRKTSNFFWACILFLGSLGFLLVGTSSYLGRNLISLFPSQQIPFFPQGIVMSFYGIAGLFISSYLWCTISWNVGSGYDRFDRKEGIVYIFRWGFPGKNRRIFLRFLMKDIQSIRMEVKEGVYPRPALYMEIRGQGTIPLTRTDENFTSREMEQKAAELAYFLNVPIEVF.

2 consecutive transmembrane segments (helical) span residues 22–42 and 57–77; these read FFWA…GTSS and IPFF…LFIS.

This sequence belongs to the Ycf4 family.

Its subcellular location is the plastid. The protein resides in the chloroplast thylakoid membrane. Seems to be required for the assembly of the photosystem I complex. In Ceratophyllum demersum (Rigid hornwort), this protein is Photosystem I assembly protein Ycf4.